The sequence spans 284 residues: Bifunctional protein FolD (284 aa).

NADP(+) contacts are provided by residues 166–168 and I232; that span reads GAS.

Belongs to the tetrahydrofolate dehydrogenase/cyclohydrolase family. Homodimer.

It catalyses the reaction (6R)-5,10-methylene-5,6,7,8-tetrahydrofolate + NADP(+) = (6R)-5,10-methenyltetrahydrofolate + NADPH. The enzyme catalyses (6R)-5,10-methenyltetrahydrofolate + H2O = (6R)-10-formyltetrahydrofolate + H(+). The protein operates within one-carbon metabolism; tetrahydrofolate interconversion. Functionally, catalyzes the oxidation of 5,10-methylenetetrahydrofolate to 5,10-methenyltetrahydrofolate and then the hydrolysis of 5,10-methenyltetrahydrofolate to 10-formyltetrahydrofolate. In Pseudomonas paraeruginosa (strain DSM 24068 / PA7) (Pseudomonas aeruginosa (strain PA7)), this protein is Bifunctional protein FolD.